The following is a 445-amino-acid chain: Transcription activator AFTR-1 (445 aa).

Residues 17 to 44 constitute a DNA-binding region (zn(2)-C6 fungal-type); that stretch reads CDFCTQSKLRCNKNKPSCRRCTLQQQPC. The disordered stretch occupies residues 50 to 89; sequence RRTGRPPKHPRKANDCQEANGQHGDQDPVTSTPGGSYQQQ. Residues 51–60 are compositionally biased toward basic residues; that stretch reads RTGRPPKHPR. Residues 77–89 show a composition bias toward polar residues; the sequence is PVTSTPGGSYQQQ.

The protein resides in the nucleus. Transcription factor that regulates the expression of the gene clusters that mediate the biosynthesis of the host-selective toxins (HSTs) AF-toxins responsible for Alternaria black spot of strawberry disease by the strawberry pathotype. On cellular level, AF-toxins affect plasma membrane of susceptible cells and cause a sudden increase in loss of K(+) after a few minutes of toxin treatment. The sequence is that of Transcription activator AFTR-1 from Alternaria alternata (Alternaria rot fungus).